Reading from the N-terminus, the 817-residue chain is Myosin-A (817 aa).

Ser19 carries the post-translational modification Phosphoserine. Residues 97–771 (MSFGDIGLLN…GAKMLSKIQR (675 aa)) enclose the Myosin motor domain. ATP is bound at residue 191–198 (GESGAGKT). Positions 661–671 (PHFIRCIKPNE) are actin-binding. The interval 773–817 (KLVEWENCVSVIEAAIMKYKHKQNVENNVSSLMRVQAHIRKRMVA) is tail.

This sequence belongs to the TRAFAC class myosin-kinesin ATPase superfamily. Myosin family. Interacts with ACT1.

Its subcellular location is the cell membrane. Myosins are actin-based motor molecules with ATPase activity. Unconventional myosins serve in intracellular movements. Their highly divergent tails are presumed to bind to membranous compartments, which would be moved relative to actin filaments. In Plasmodium yoelii yoelii, this protein is Myosin-A.